A 705-amino-acid polypeptide reads, in one-letter code: Elongation factor G (705 aa).

Positions 8–290 (ERYRNFGIMA…GVVHLLPSPA (283 aa)) constitute a tr-type G domain. GTP-binding positions include 17–24 (AHIDAGKT), 88–92 (DTPGH), and 142–145 (NKMD). A disordered region spans residues 290–309 (ADRPPVQGIDENEKEDTRDA).

Belongs to the TRAFAC class translation factor GTPase superfamily. Classic translation factor GTPase family. EF-G/EF-2 subfamily.

Its subcellular location is the cytoplasm. Functionally, catalyzes the GTP-dependent ribosomal translocation step during translation elongation. During this step, the ribosome changes from the pre-translocational (PRE) to the post-translocational (POST) state as the newly formed A-site-bound peptidyl-tRNA and P-site-bound deacylated tRNA move to the P and E sites, respectively. Catalyzes the coordinated movement of the two tRNA molecules, the mRNA and conformational changes in the ribosome. This chain is Elongation factor G, found in Xanthomonas campestris pv. campestris (strain 8004).